A 336-amino-acid chain; its full sequence is Dihydroorotate dehydrogenase (quinone) (336 aa).

FMN is bound by residues 62 to 66 (AGLDK) and T86. Residue K66 coordinates substrate. 111–115 (NRMGF) contributes to the substrate binding site. Residues N139 and N172 each contribute to the FMN site. Position 172 (N172) interacts with substrate. S175 serves as the catalytic Nucleophile. N177 provides a ligand contact to substrate. FMN contacts are provided by K217 and T245. Position 246–247 (246–247 (NT)) interacts with substrate. FMN is bound by residues G268, G297, and 318-319 (YS).

This sequence belongs to the dihydroorotate dehydrogenase family. Type 2 subfamily. Monomer. It depends on FMN as a cofactor.

Its subcellular location is the cell membrane. The catalysed reaction is (S)-dihydroorotate + a quinone = orotate + a quinol. It participates in pyrimidine metabolism; UMP biosynthesis via de novo pathway; orotate from (S)-dihydroorotate (quinone route): step 1/1. Its function is as follows. Catalyzes the conversion of dihydroorotate to orotate with quinone as electron acceptor. This chain is Dihydroorotate dehydrogenase (quinone), found in Klebsiella pneumoniae subsp. pneumoniae (strain ATCC 700721 / MGH 78578).